Consider the following 564-residue polypeptide: Kelch repeat and BTB domain-containing protein 1 (564 aa).

Positions 21–88 (CDIDIVINDE…IYGIPLSLTN (68 aa)) constitute a BTB domain. One can recognise a BACK domain in the interval 123-219 (CIDFYIYADK…SLLSPQVIKS (97 aa)). Kelch repeat units follow at residues 252–297 (IELI…VLDN), 298–346 (IIYM…ADDE), 347–395 (YIYC…MLNG), 397–441 (IYVI…VHAG), 442–492 (KIYI…SVHN), and 494–539 (LYVG…CEPI).

Interacts (via BTB domain) with host CUL3.

Its subcellular location is the host cytoplasm. In terms of biological role, probable substrate-specific adapter of CUL3-containing E3 ubiquitin-protein ligases which mediate the ubiquitination and subsequent proteasomal degradation of host target proteins. The sequence is that of Kelch repeat and BTB domain-containing protein 1 (KBTB1) from Camelus.